A 254-amino-acid polypeptide reads, in one-letter code: Zinc transporter GufA (254 aa).

7 helical membrane-spanning segments follow: residues 4–24 (GLVA…PVLV), 74–94 (VAAG…LMPH), 112–132 (ALLF…AVGV), 143–163 (LSVA…VALA), 176–196 (FLAL…VLAL), 198–218 (LSSA…LYVI), and 234–254 (EATT…MSLG). The Zn(2+) site is built by N123, E126, Q152, N153, E156, and E185.

The protein belongs to the ZIP transporter (TC 2.A.5) family. In terms of assembly, homodimer.

It localises to the cell inner membrane. Its function is as follows. Mediates the uptake of Zn(2+). This chain is Zinc transporter GufA (gufA), found in Myxococcus xanthus.